Consider the following 247-residue polypeptide: MTPFWIALQFLTVLPIELKTIPTAQQNGRAILFYPLVGLIIGGILFLVTCIFVKLPALLLAAIVLALWIWLTGGLHLDGLADTADAWVGGFGDKLRTLQIMKDPSCGPIGVLSLVIICLLKFALVYVLIEQHQSLFLICIPILGRVVPSILFLTTPYVREKGLGRSLTDHLPKTASWIITGFVLLLPLYWGWQGLIAIIGFLISLVYLRHVFIKRIGGITGDTVGAAIEIGETVLMFTFVVSYFYLV.

6 helical membrane passes run 31 to 51, 55 to 75, 109 to 129, 135 to 155, 183 to 203, and 227 to 247; these read ILFY…VTCI, LPAL…TGGL, IGVL…YVLI, LFLI…FLTT, VLLL…GFLI, and AIEI…FYLV.

This sequence belongs to the CobS family. It depends on Mg(2+) as a cofactor.

It localises to the cell inner membrane. It catalyses the reaction alpha-ribazole + adenosylcob(III)inamide-GDP = adenosylcob(III)alamin + GMP + H(+). The catalysed reaction is alpha-ribazole 5'-phosphate + adenosylcob(III)inamide-GDP = adenosylcob(III)alamin 5'-phosphate + GMP + H(+). It participates in cofactor biosynthesis; adenosylcobalamin biosynthesis; adenosylcobalamin from cob(II)yrinate a,c-diamide: step 7/7. Its function is as follows. Joins adenosylcobinamide-GDP and alpha-ribazole to generate adenosylcobalamin (Ado-cobalamin). Also synthesizes adenosylcobalamin 5'-phosphate from adenosylcobinamide-GDP and alpha-ribazole 5'-phosphate. This is Adenosylcobinamide-GDP ribazoletransferase from Acinetobacter baumannii (strain ATCC 17978 / DSM 105126 / CIP 53.77 / LMG 1025 / NCDC KC755 / 5377).